The primary structure comprises 137 residues: Histone H2B.3 (137 aa).

Residues lysine 1–aspartate 37 are compositionally biased toward basic and acidic residues. A disordered region spans residues lysine 1–lysine 45. N6-acetyllysine occurs at positions 27 and 28. Residue lysine 133 forms a Glycyl lysine isopeptide (Lys-Gly) (interchain with G-Cter in ubiquitin) linkage.

Belongs to the histone H2B family. In terms of assembly, the nucleosome is a histone octamer containing two molecules each of H2A, H2B, H3 and H4 assembled in one H3-H4 heterotetramer and two H2A-H2B heterodimers. The octamer wraps approximately 147 bp of DNA. Post-translationally, can be acetylated to formH2BK33ac and H2BK34ac. In terms of processing, monoubiquitinated to form H2BK143ub1; may give a specific tag for epigenetic transcriptional activation. As to expression, ubiquitous. Highest level in shoots, fruits and young flower buds, including petals, anthers and ovules.

The protein localises to the nucleus. It is found in the chromosome. In terms of biological role, core component of nucleosome. Nucleosomes wrap and compact DNA into chromatin, limiting DNA accessibility to the cellular machineries which require DNA as a template. Histones thereby play a central role in transcription regulation, DNA repair, DNA replication and chromosomal stability. DNA accessibility is regulated via a complex set of post-translational modifications of histones, also called histone code, and nucleosome remodeling. The chain is Histone H2B.3 (H2B-3) from Solanum lycopersicum (Tomato).